The following is a 712-amino-acid chain: Polyribonucleotide nucleotidyltransferase (712 aa).

Positions 487 and 493 each coordinate Mg(2+). The KH domain maps to 554–613; sequence PKILTMQINPEKIREVIGPSGKQINKIIDETGVKIDIEQDGTIFISSVNEAMNQKAKQII. The 69-residue stretch at 623–691 folds into the S1 motif domain; sequence GQIYLGKVKR…KQGRVNLSRK (69 aa).

This sequence belongs to the polyribonucleotide nucleotidyltransferase family. The cofactor is Mg(2+).

It is found in the cytoplasm. The catalysed reaction is RNA(n+1) + phosphate = RNA(n) + a ribonucleoside 5'-diphosphate. Its function is as follows. Involved in mRNA degradation. Catalyzes the phosphorolysis of single-stranded polyribonucleotides processively in the 3'- to 5'-direction. The chain is Polyribonucleotide nucleotidyltransferase from Geobacillus sp. (strain WCH70).